The sequence spans 262 residues: Putative phosphatase HI_0003 (262 aa).

Asp-9 serves as the catalytic Nucleophile. Positions 9 and 11 each coordinate Mg(2+). Residues 43-44 (SA) and Lys-189 each bind phosphate. Position 212 (Asp-212) interacts with Mg(2+). Phosphate is bound at residue Asn-215.

Belongs to the HAD-like hydrolase superfamily. Cof family. Requires Mg(2+) as cofactor.

In Haemophilus influenzae (strain ATCC 51907 / DSM 11121 / KW20 / Rd), this protein is Putative phosphatase HI_0003.